Reading from the N-terminus, the 143-residue chain is Ribosome-binding factor A (143 aa).

The interval 123-143 (DKSLQENYKQNDKETKAEKLR) is disordered.

The protein belongs to the RbfA family. Monomer. Binds 30S ribosomal subunits, but not 50S ribosomal subunits or 70S ribosomes.

Its subcellular location is the cytoplasm. Functionally, one of several proteins that assist in the late maturation steps of the functional core of the 30S ribosomal subunit. Associates with free 30S ribosomal subunits (but not with 30S subunits that are part of 70S ribosomes or polysomes). Required for efficient processing of 16S rRNA. May interact with the 5'-terminal helix region of 16S rRNA. The chain is Ribosome-binding factor A from Francisella tularensis subsp. mediasiatica (strain FSC147).